The sequence spans 326 residues: Putative ribose-phosphate pyrophosphokinase 2 (326 aa).

Residues 43–45 (DGE) and 102–103 (RQ) each bind ATP. H136 serves as a coordination point for Mg(2+). D-ribose 5-phosphate is bound by residues D225 and 229-233 (NTGKT).

It belongs to the ribose-phosphate pyrophosphokinase family. Class I subfamily. Homohexamer. Mg(2+) is required as a cofactor.

It localises to the cytoplasm. The catalysed reaction is D-ribose 5-phosphate + ATP = 5-phospho-alpha-D-ribose 1-diphosphate + AMP + H(+). It participates in metabolic intermediate biosynthesis; 5-phospho-alpha-D-ribose 1-diphosphate biosynthesis; 5-phospho-alpha-D-ribose 1-diphosphate from D-ribose 5-phosphate (route I): step 1/1. Involved in the biosynthesis of the central metabolite phospho-alpha-D-ribosyl-1-pyrophosphate (PRPP) via the transfer of pyrophosphoryl group from ATP to 1-hydroxyl of ribose-5-phosphate (Rib-5-P). In Streptococcus pyogenes serotype M18 (strain MGAS8232), this protein is Putative ribose-phosphate pyrophosphokinase 2.